Reading from the N-terminus, the 297-residue chain is Molybdate/tungstate import ATP-binding protein WtpC (297 aa).

In terms of domain architecture, ABC transporter spans 2–226 (LKVNNLSKIW…PKNKKVAEFL (225 aa)). ATP is bound at residue 32 to 39 (GPSGAGKS).

It belongs to the ABC transporter superfamily. Sulfate/tungstate importer (TC 3.A.1.6) family. In terms of assembly, the complex is composed of two ATP-binding proteins (WtpC), two transmembrane proteins (WtpB) and a solute-binding protein (WtpA).

The protein localises to the cell membrane. It catalyses the reaction tungstate(in) + ATP + H2O = tungstate(out) + ADP + phosphate + H(+). Functionally, part of the ABC transporter complex WtpABC involved in molybdate/tungstate import. Responsible for energy coupling to the transport system. This chain is Molybdate/tungstate import ATP-binding protein WtpC (wtpC), found in Methanocaldococcus jannaschii (strain ATCC 43067 / DSM 2661 / JAL-1 / JCM 10045 / NBRC 100440) (Methanococcus jannaschii).